The following is a 161-amino-acid chain: Dihydrofolate reductase (161 aa).

The 156-residue stretch at 2–157 (TLSIIVAHDK…IPHTFLHLVR (156 aa)) folds into the DHFR domain. 6 to 8 (IVA) serves as a coordination point for substrate. Residues 7-8 (VA) and 15-20 (IGYQNQ) each bind NADP(+). Asp28 lines the substrate pocket. 44-47 (GRKT) serves as a coordination point for NADP(+). Position 58 (Arg58) interacts with substrate. Residues 63-66 (LTNQ) and 93-98 (FGGQTL) each bind NADP(+). Thr112 is a substrate binding site.

It belongs to the dihydrofolate reductase family.

The enzyme catalyses (6S)-5,6,7,8-tetrahydrofolate + NADP(+) = 7,8-dihydrofolate + NADPH + H(+). It participates in cofactor biosynthesis; tetrahydrofolate biosynthesis; 5,6,7,8-tetrahydrofolate from 7,8-dihydrofolate: step 1/1. Its function is as follows. Key enzyme in folate metabolism. Catalyzes an essential reaction for de novo glycine and purine synthesis, and for DNA precursor synthesis. The polypeptide is Dihydrofolate reductase (folA) (Staphylococcus epidermidis).